Reading from the N-terminus, the 1133-residue chain is Early transcription factor large subunit homolog (1133 aa).

In terms of domain architecture, Helicase ATP-binding spans K52 to Q352. W99–S106 contributes to the ATP binding site. A DEAH box motif is present at residues D281 to H284. One can recognise a Helicase C-terminal domain in the interval M524–A724.

It belongs to the DEAD box helicase family. DEAH subfamily.

The protein localises to the virion. The catalysed reaction is ATP + H2O = ADP + phosphate + H(+). In terms of biological role, putative initation factor. This chain is Early transcription factor large subunit homolog, found in Ornithodoros (relapsing fever ticks).